The following is a 35-amino-acid chain: Thaumatin-like protein 6 (35 aa).

The protein belongs to the thaumatin family.

The polypeptide is Thaumatin-like protein 6 (Glebionis coronaria (Crown daisy)).